The sequence spans 302 residues: UTP--glucose-1-phosphate uridylyltransferase (302 aa).

The protein belongs to the UDPGP type 2 family. As to quaternary structure, homotetramer or homopentamer. Requires Mg(2+) as cofactor.

The enzyme catalyses alpha-D-glucose 1-phosphate + UTP + H(+) = UDP-alpha-D-glucose + diphosphate. Functionally, may play a role in stationary phase survival. The chain is UTP--glucose-1-phosphate uridylyltransferase (galU) from Escherichia coli O157:H7.